We begin with the raw amino-acid sequence, 753 residues long: 5-methyltetrahydropteroyltriglutamate--homocysteine methyltransferase (753 aa).

Residues 17-20 and lysine 117 contribute to the 5-methyltetrahydropteroyltri-L-glutamate site; that span reads RELK. L-homocysteine contacts are provided by residues 431–433 and glutamate 484; that span reads IGS. L-methionine-binding positions include 431–433 and glutamate 484; that span reads IGS. Residues 515 to 516 and tryptophan 561 each bind 5-methyltetrahydropteroyltri-L-glutamate; that span reads RC. Aspartate 599 is an L-homocysteine binding site. Aspartate 599 contacts L-methionine. Glutamate 605 is a binding site for 5-methyltetrahydropteroyltri-L-glutamate. Residues histidine 641, cysteine 643, and glutamate 665 each coordinate Zn(2+). Residue histidine 694 is the Proton donor of the active site. A Zn(2+)-binding site is contributed by cysteine 726.

It belongs to the vitamin-B12 independent methionine synthase family. Requires Zn(2+) as cofactor.

The catalysed reaction is 5-methyltetrahydropteroyltri-L-glutamate + L-homocysteine = tetrahydropteroyltri-L-glutamate + L-methionine. The protein operates within amino-acid biosynthesis; L-methionine biosynthesis via de novo pathway; L-methionine from L-homocysteine (MetE route): step 1/1. Catalyzes the transfer of a methyl group from 5-methyltetrahydrofolate to homocysteine resulting in methionine formation. The sequence is that of 5-methyltetrahydropteroyltriglutamate--homocysteine methyltransferase from Escherichia coli O157:H7 (strain EC4115 / EHEC).